Here is a 419-residue protein sequence, read N- to C-terminus: Putative zinc metalloprotease SP_0263 (419 aa).

His-18 serves as a coordination point for Zn(2+). Glu-19 is an active-site residue. His-22 is a Zn(2+) binding site. The next 3 membrane-spanning stretches (helical) occupy residues 169–191 (LITN…WVLI), 345–367 (ILYF…IPAL), and 388–410 (EIET…AVTW).

It belongs to the peptidase M50B family. Zn(2+) is required as a cofactor.

It localises to the cell membrane. The sequence is that of Putative zinc metalloprotease SP_0263 from Streptococcus pneumoniae serotype 4 (strain ATCC BAA-334 / TIGR4).